Reading from the N-terminus, the 198-residue chain is FMN-dependent NADH:quinone oxidoreductase (198 aa).

Residues 92-95 and 136-139 each bind FMN; these read MWNL and SRGG.

It belongs to the azoreductase type 1 family. In terms of assembly, homodimer. FMN serves as cofactor.

It carries out the reaction 2 a quinone + NADH + H(+) = 2 a 1,4-benzosemiquinone + NAD(+). The enzyme catalyses N,N-dimethyl-1,4-phenylenediamine + anthranilate + 2 NAD(+) = 2-(4-dimethylaminophenyl)diazenylbenzoate + 2 NADH + 2 H(+). Its function is as follows. Quinone reductase that provides resistance to thiol-specific stress caused by electrophilic quinones. Functionally, also exhibits azoreductase activity. Catalyzes the reductive cleavage of the azo bond in aromatic azo compounds to the corresponding amines. In Clostridium perfringens (strain SM101 / Type A), this protein is FMN-dependent NADH:quinone oxidoreductase.